Reading from the N-terminus, the 494-residue chain is Ketol-acid reductoisomerase (NADP(+)) (494 aa).

The KARI N-terminal Rossmann domain maps to 14–208 (LDQLGRCRFM…GGHRAGCLAS (195 aa)). Residues 45–48 (CGAQ), Arg-68, Arg-76, Ser-78, and 108–110 (DKQ) each bind NADP(+). His-132 is an active-site residue. Residue Gly-158 coordinates NADP(+). KARI C-terminal knotted domains follow at residues 209–344 (SFVA…NYPT) and 345–487 (TDVK…MKDM). 4 residues coordinate Mg(2+): Asp-217, Glu-221, Glu-389, and Glu-393. Residue Ser-414 coordinates substrate.

It belongs to the ketol-acid reductoisomerase family. It depends on Mg(2+) as a cofactor.

It carries out the reaction (2R)-2,3-dihydroxy-3-methylbutanoate + NADP(+) = (2S)-2-acetolactate + NADPH + H(+). The enzyme catalyses (2R,3R)-2,3-dihydroxy-3-methylpentanoate + NADP(+) = (S)-2-ethyl-2-hydroxy-3-oxobutanoate + NADPH + H(+). The protein operates within amino-acid biosynthesis; L-isoleucine biosynthesis; L-isoleucine from 2-oxobutanoate: step 2/4. It functions in the pathway amino-acid biosynthesis; L-valine biosynthesis; L-valine from pyruvate: step 2/4. In terms of biological role, involved in the biosynthesis of branched-chain amino acids (BCAA). Catalyzes an alkyl-migration followed by a ketol-acid reduction of (S)-2-acetolactate (S2AL) to yield (R)-2,3-dihydroxy-isovalerate. In the isomerase reaction, S2AL is rearranged via a Mg-dependent methyl migration to produce 3-hydroxy-3-methyl-2-ketobutyrate (HMKB). In the reductase reaction, this 2-ketoacid undergoes a metal-dependent reduction by NADPH to yield (R)-2,3-dihydroxy-isovalerate. The sequence is that of Ketol-acid reductoisomerase (NADP(+)) from Vibrio cholerae serotype O1 (strain ATCC 39541 / Classical Ogawa 395 / O395).